The following is a 359-amino-acid chain: Heme A synthase (359 aa).

5 helical membrane-spanning segments follow: residues 8-28, 94-114, 124-144, 159-179, and 215-235; these read IMSI…VVGG, LLGR…CYLK, LLLI…MVKS, GHLL…LIII, and IIIF…GLDA. His-274 contacts heme. 3 helical membrane-spanning segments follow: residues 276 to 296, 303 to 323, and 328 to 348; these read WFGI…IILN, MGMV…ITLL, and ILAA…FLFI. His-334 lines the heme pocket.

The protein belongs to the COX15/CtaA family. Type 2 subfamily. As to quaternary structure, interacts with CtaB. Heme b is required as a cofactor.

Its subcellular location is the cell membrane. The enzyme catalyses Fe(II)-heme o + 2 A + H2O = Fe(II)-heme a + 2 AH2. Its pathway is porphyrin-containing compound metabolism; heme A biosynthesis; heme A from heme O: step 1/1. Its function is as follows. Catalyzes the conversion of heme O to heme A by two successive hydroxylations of the methyl group at C8. The first hydroxylation forms heme I, the second hydroxylation results in an unstable dihydroxymethyl group, which spontaneously dehydrates, resulting in the formyl group of heme A. This chain is Heme A synthase, found in Orientia tsutsugamushi (strain Boryong) (Rickettsia tsutsugamushi).